The sequence spans 63 residues: MAIKPAYVKKTGTLLMERYPDAFGADFEHNKDVVEELTNIESKGVRNRIAGYVTRKMNNPVEA.

Belongs to the eukaryotic ribosomal protein eS17 family.

The sequence is that of Small ribosomal subunit protein eS17 (rps17e) from Haloarcula marismortui (strain ATCC 43049 / DSM 3752 / JCM 8966 / VKM B-1809) (Halobacterium marismortui).